Consider the following 171-residue polypeptide: Large ribosomal subunit protein bL17 (171 aa).

Residues 140 to 152 show a composition bias toward basic and acidic residues; sequence KREIQTKAREEKR. Residues 140 to 171 form a disordered region; it reads KREIQTKAREEKRATRKSNSAPVSKETTSKKK. Positions 156–165 are enriched in polar residues; that stretch reads KSNSAPVSKE.

This sequence belongs to the bacterial ribosomal protein bL17 family. In terms of assembly, part of the 50S ribosomal subunit. Contacts protein L32.

This chain is Large ribosomal subunit protein bL17, found in Leptospira interrogans serogroup Icterohaemorrhagiae serovar copenhageni (strain Fiocruz L1-130).